We begin with the raw amino-acid sequence, 55 residues long: Large ribosomal subunit protein bL33 (55 aa).

This sequence belongs to the bacterial ribosomal protein bL33 family.

This chain is Large ribosomal subunit protein bL33, found in Vibrio atlanticus (strain LGP32) (Vibrio splendidus (strain Mel32)).